Consider the following 331-residue polypeptide: Cathepsin S (331 aa).

A signal peptide spans methionine 1–alanine 16. A propeptide spans glutamine 17–lysine 114 (activation peptide). N-linked (GlcNAc...) asparagine glycosylation occurs at asparagine 104. 4 disulfide bridges follow: cysteine 126–cysteine 224, cysteine 136–cysteine 180, cysteine 170–cysteine 213, and cysteine 272–cysteine 320. Cysteine 139 is an active-site residue. Residues histidine 278 and asparagine 298 contribute to the active site.

It belongs to the peptidase C1 family.

The protein localises to the lysosome. It is found in the secreted. The protein resides in the cytoplasmic vesicle. Its subcellular location is the phagosome. It catalyses the reaction Similar to cathepsin L, but with much less activity on Z-Phe-Arg-|-NHMec, and more activity on the Z-Val-Val-Arg-|-Xaa compound.. Thiol protease. Key protease responsible for the removal of the invariant chain from MHC class II molecules and MHC class II antigen presentation. The bond-specificity of this proteinase is in part similar to the specificities of cathepsin L. The polypeptide is Cathepsin S (CTSS) (Canis lupus familiaris (Dog)).